The following is a 375-amino-acid chain: tRNA-specific 2-thiouridylase MnmA (375 aa).

ATP contacts are provided by residues 9–16 (AMSGGVDS) and Leu-35. The active-site Nucleophile is the Cys-105. A disulfide bond links Cys-105 and Cys-201. Position 129 (Gly-129) interacts with ATP. Residues 151–153 (KNQ) are interaction with tRNA. Cys-201 acts as the Cysteine persulfide intermediate in catalysis. The tract at residues 307–308 (RY) is interaction with tRNA.

This sequence belongs to the MnmA/TRMU family.

It is found in the cytoplasm. The catalysed reaction is S-sulfanyl-L-cysteinyl-[protein] + uridine(34) in tRNA + AH2 + ATP = 2-thiouridine(34) in tRNA + L-cysteinyl-[protein] + A + AMP + diphosphate + H(+). In terms of biological role, catalyzes the 2-thiolation of uridine at the wobble position (U34) of tRNA, leading to the formation of s(2)U34. This Leptospira interrogans serogroup Icterohaemorrhagiae serovar copenhageni (strain Fiocruz L1-130) protein is tRNA-specific 2-thiouridylase MnmA.